The primary structure comprises 250 residues: Adenosylcobinamide-GDP ribazoletransferase (250 aa).

A run of 6 helical transmembrane segments spans residues 32–52 (KGIIYFPVVGGIIGALLMVAY), 59–79 (LAHSLSALLTVGFFVFLTGGL), 113–133 (GVLAMVFILLLKLYGIQGLGE), 136–156 (IYWGIILMPVMGRQAIVYGCY), 185–205 (LTFILAAMHLPSLIFALLLPI), and 230–250 (CELTEGCYLLFILLITGAGLF).

It belongs to the CobS family. It depends on Mg(2+) as a cofactor.

The protein resides in the cell membrane. It carries out the reaction alpha-ribazole + adenosylcob(III)inamide-GDP = adenosylcob(III)alamin + GMP + H(+). It catalyses the reaction alpha-ribazole 5'-phosphate + adenosylcob(III)inamide-GDP = adenosylcob(III)alamin 5'-phosphate + GMP + H(+). It participates in cofactor biosynthesis; adenosylcobalamin biosynthesis; adenosylcobalamin from cob(II)yrinate a,c-diamide: step 7/7. Functionally, joins adenosylcobinamide-GDP and alpha-ribazole to generate adenosylcobalamin (Ado-cobalamin). Also synthesizes adenosylcobalamin 5'-phosphate from adenosylcobinamide-GDP and alpha-ribazole 5'-phosphate. The chain is Adenosylcobinamide-GDP ribazoletransferase from Alkaliphilus metalliredigens (strain QYMF).